The primary structure comprises 437 residues: Phosphoglucosamine mutase (437 aa).

The Phosphoserine intermediate role is filled by Ser-101. Ser-101, Asp-234, Asp-236, and Asp-238 together coordinate Mg(2+). Ser-101 bears the Phosphoserine mark.

It belongs to the phosphohexose mutase family. Mg(2+) is required as a cofactor. Activated by phosphorylation.

The enzyme catalyses alpha-D-glucosamine 1-phosphate = D-glucosamine 6-phosphate. Functionally, catalyzes the conversion of glucosamine-6-phosphate to glucosamine-1-phosphate. In Thermus thermophilus (strain ATCC 27634 / DSM 579 / HB8), this protein is Phosphoglucosamine mutase.